The sequence spans 265 residues: Upstream stimulatory factor (265 aa).

Basic and acidic residues predominate over residues 1-18 (MDVQDHTLDQGPQDKDKD). Disordered regions lie at residues 1-21 (MDVQ…DLEE) and 119-149 (ASAA…AAGG). Positions 134-144 (GEQQPGITQPS) are enriched in polar residues. The bHLH domain maps to 190–245 (RRRATHNEVERRRRDKINNWIVKLSKIIPDCNIDHSKQGQSKGGILTKTCDYIHDL).

As to quaternary structure, efficient DNA binding requires dimerization with another bHLH protein. Binds DNA as a homodimer or a heterodimer. In terms of tissue distribution, enriched in ectodermal tissue.

The protein localises to the nucleus. In terms of biological role, may act as a transcription factor which recognizes the CACGTG motif on SPEC gene promoters. This is Upstream stimulatory factor from Strongylocentrotus purpuratus (Purple sea urchin).